A 206-amino-acid chain; its full sequence is Protein Ta0236 (206 aa).

Residues 16–205 enclose the AMMECR1 domain; the sequence is DIGTKAVRLA…EKDPEGVVEK (190 aa).

In Thermoplasma acidophilum (strain ATCC 25905 / DSM 1728 / JCM 9062 / NBRC 15155 / AMRC-C165), this protein is Protein Ta0236.